The following is an 896-amino-acid chain: Microsomal triglyceride transfer protein large subunit (896 aa).

The signal sequence occupies residues 1–21 (MILLAVLFLCFFSSYSASVKG). Positions 28-659 (LNNERLYKLT…IFQYIGKAEL (632 aa)) constitute a Vitellogenin domain. A disulfide bridge connects residues Cys-174 and Cys-194.

In terms of assembly, heterodimer; heterodimerizes with the protein disulfide isomerase (P4HB/PDI). Interacts with APOB. Interacts with PRAP1.

It localises to the endoplasmic reticulum. Its subcellular location is the golgi apparatus. The catalysed reaction is a 1,2-diacyl-sn-glycero-3-phosphocholine(in) = a 1,2-diacyl-sn-glycero-3-phosphocholine(out). It carries out the reaction a 1,2-diacyl-sn-glycero-3-phosphoethanolamine(in) = a 1,2-diacyl-sn-glycero-3-phosphoethanolamine(out). The enzyme catalyses a cholesterol ester(in) = a cholesterol ester(out). It catalyses the reaction a triacyl-sn-glycerol(in) = a triacyl-sn-glycerol(out). Functionally, catalyzes the transport of triglyceride, cholesteryl ester, and phospholipid between phospholipid surfaces. Required for the assembly and secretion of plasma lipoproteins that contain apolipoprotein B. May be involved in regulating cholesteryl ester biosynthesis in cells that produce lipoproteins. The polypeptide is Microsomal triglyceride transfer protein large subunit (Mttp) (Rattus norvegicus (Rat)).